We begin with the raw amino-acid sequence, 352 residues long: Histidine protein kinase SaeS (352 aa).

The next 2 helical transmembrane spans lie at 9–29 (QIII…VIAY) and 41–61 (TLAI…SIFI). Positions 130 to 349 (NLAHDLKTPL…TMTLTLKKFQ (220 aa)) constitute a Histidine kinase domain. His133 carries the post-translational modification Phosphohistidine; by autocatalysis.

In terms of processing, autophosphorylated.

It localises to the cell membrane. It carries out the reaction ATP + protein L-histidine = ADP + protein N-phospho-L-histidine.. Its function is as follows. Member of the two-component regulatory system SaeR/SaeS. Probably functions as a membrane-associated protein kinase that upon sensing the appropriate signal, autophosphorylates and in turn activates the cytosolic response regulator SaeR. In Staphylococcus epidermidis (strain ATCC 35984 / DSM 28319 / BCRC 17069 / CCUG 31568 / BM 3577 / RP62A), this protein is Histidine protein kinase SaeS (saeS).